Here is a 99-residue protein sequence, read N- to C-terminus: Large ribosomal subunit protein uL23c (99 aa).

The protein belongs to the universal ribosomal protein uL23 family. Part of the 50S ribosomal subunit.

It is found in the plastid. The protein localises to the chloroplast. Its function is as follows. Binds to 23S rRNA. This chain is Large ribosomal subunit protein uL23c (rpl23), found in Emiliania huxleyi (Coccolithophore).